A 727-amino-acid chain; its full sequence is Glucans biosynthesis glucosyltransferase H (727 aa).

The segment at 18–38 is disordered; sequence SAMPNERPGAMEPQNLSKMPE. A run of 7 helical transmembrane segments spans residues 58 to 78, 97 to 117, 278 to 298, 408 to 428, 460 to 480, 496 to 516, and 572 to 592; these read FLVV…MGAV, VNFC…LILL, LQQF…GWWV, IMAY…LMLA, LFYI…LLLL, IFSV…MMFI, and LLAW…ISAW.

This sequence belongs to the glycosyltransferase 2 family. OpgH subfamily.

It localises to the cell inner membrane. The protein operates within glycan metabolism; osmoregulated periplasmic glucan (OPG) biosynthesis. In terms of biological role, involved in the biosynthesis of osmoregulated periplasmic glucans (OPGs). This is Glucans biosynthesis glucosyltransferase H from Shewanella baltica (strain OS185).